The following is a 610-amino-acid chain: Chitinase 63 (610 aa).

The N-terminal stretch at Met-1–Ala-30 is a signal peptide. The CBM2 domain occupies Ala-31 to Ser-134. 2 disordered regions span residues Lys-125–Ile-153 and Ala-208–Gly-239. The Fibronectin type-III domain occupies Ala-144–Gly-229. A compositionally biased stretch (polar residues) spans Asp-213–Val-224. The 370-residue stretch at Glu-241–Lys-610 folds into the GH18 domain. Chitin-binding positions include Asp-313–Gln-314 and Gly-340–Thr-343. Glu-383 functions as the Proton donor in the catalytic mechanism. Chitin contacts are provided by residues Tyr-384, Met-450–Asp-453, and Trp-590.

The protein belongs to the glycosyl hydrolase 18 family. Chitinase class II subfamily.

It carries out the reaction Random endo-hydrolysis of N-acetyl-beta-D-glucosaminide (1-&gt;4)-beta-linkages in chitin and chitodextrins.. The polypeptide is Chitinase 63 (chtA) (Streptomyces plicatus).